The sequence spans 105 residues: ATP-dependent Clp protease adapter protein ClpS (105 aa).

Belongs to the ClpS family. Binds to the N-terminal domain of the chaperone ClpA.

Functionally, involved in the modulation of the specificity of the ClpAP-mediated ATP-dependent protein degradation. This chain is ATP-dependent Clp protease adapter protein ClpS, found in Streptomyces avermitilis (strain ATCC 31267 / DSM 46492 / JCM 5070 / NBRC 14893 / NCIMB 12804 / NRRL 8165 / MA-4680).